A 229-amino-acid polypeptide reads, in one-letter code: UPF0758 protein Caur_3603 (229 aa).

Residues 105 to 227 enclose the MPN domain; that stretch reads PIRSPADVAT…YVSLRERGLG (123 aa). Residues His-176, His-178, and Asp-189 each contribute to the Zn(2+) site. The JAMM motif motif lies at 176-189; sequence HNHPSGEPTPSMED.

Belongs to the UPF0758 family.

This chain is UPF0758 protein Caur_3603, found in Chloroflexus aurantiacus (strain ATCC 29366 / DSM 635 / J-10-fl).